The chain runs to 349 residues: Phenylalanine--tRNA ligase alpha subunit (349 aa).

Glutamate 259 lines the Mg(2+) pocket.

It belongs to the class-II aminoacyl-tRNA synthetase family. Phe-tRNA synthetase alpha subunit type 1 subfamily. Tetramer of two alpha and two beta subunits. Requires Mg(2+) as cofactor.

The protein localises to the cytoplasm. It catalyses the reaction tRNA(Phe) + L-phenylalanine + ATP = L-phenylalanyl-tRNA(Phe) + AMP + diphosphate + H(+). This is Phenylalanine--tRNA ligase alpha subunit from Lactobacillus gasseri (strain ATCC 33323 / DSM 20243 / BCRC 14619 / CIP 102991 / JCM 1131 / KCTC 3163 / NCIMB 11718 / NCTC 13722 / AM63).